A 102-amino-acid polypeptide reads, in one-letter code: Large ribosomal subunit protein bL21 (102 aa).

It belongs to the bacterial ribosomal protein bL21 family. Part of the 50S ribosomal subunit. Contacts protein L20.

This protein binds to 23S rRNA in the presence of protein L20. The chain is Large ribosomal subunit protein bL21 from Staphylococcus haemolyticus (strain JCSC1435).